Reading from the N-terminus, the 196-residue chain is uncharacterized protein (196 aa).

Residues 1–23 (MSARAPKELRLALPPCLLNRTFA) form the signal peptide. N-linked (GlcNAc...) asparagine glycans are attached at residues N19 and N26. At 24 to 60 (SHNASGGSNAGIRSSGAGGGTCITQVGQQLFQSFSST) the chain is on the extracellular side. The chain crosses the membrane as a helical span at residues 61 to 81 (LVLIVLVTLIFCLIVLSLSTF). Residues 82–196 (HIHKRRMKKR…EGLLQTVVLS (115 aa)) are Cytoplasmic-facing. The disordered stretch occupies residues 93-184 (MQRAQEEYER…AHAASSCLDT (92 aa)). 2 stretches are compositionally biased toward basic and acidic residues: residues 95–106 (RAQEEYERDHCS) and 124–135 (HGKETRLERQPR). Pro residues predominate over residues 161–171 (CAPPPPPPVPS). Positions 172-181 (PHGAHAASSC) are enriched in low complexity.

The protein localises to the membrane. This is an uncharacterized protein from Rattus norvegicus (Rat).